The sequence spans 590 residues: Aspartate--tRNA ligase (590 aa).

Glutamate 174 contacts L-aspartate. The segment at 198–201 (QLMK) is aspartate. Arginine 220 is a binding site for L-aspartate. Residues 220–222 (RDE) and glutamine 229 contribute to the ATP site. Histidine 443 is an L-aspartate binding site. Glutamate 484 provides a ligand contact to ATP. An L-aspartate-binding site is contributed by arginine 491. 536–539 (GLDR) is an ATP binding site.

The protein belongs to the class-II aminoacyl-tRNA synthetase family. Type 1 subfamily. As to quaternary structure, homodimer.

It is found in the cytoplasm. It carries out the reaction tRNA(Asp) + L-aspartate + ATP = L-aspartyl-tRNA(Asp) + AMP + diphosphate. Its function is as follows. Catalyzes the attachment of L-aspartate to tRNA(Asp) in a two-step reaction: L-aspartate is first activated by ATP to form Asp-AMP and then transferred to the acceptor end of tRNA(Asp). This is Aspartate--tRNA ligase from Lactococcus lactis subsp. lactis (strain IL1403) (Streptococcus lactis).